Consider the following 155-residue polypeptide: Snaclec agkicetin-C subunit alpha (155 aa).

The first 23 residues, 1–23, serve as a signal peptide directing secretion; that stretch reads MGRFIFVSFGLLVVFLSLSGTAA. 3 disulfides stabilise this stretch: cysteine 25/cysteine 36, cysteine 53/cysteine 149, and cysteine 124/cysteine 141. Residues 32 to 150 form the C-type lectin domain; the sequence is YIRFCYQPFK…CGLKHVFMCK (119 aa).

Belongs to the snaclec family. As to quaternary structure, heterodimer of subunits alpha and beta; disulfide-linked. Expressed by the venom gland.

The protein localises to the secreted. Functionally, is a potent glycoprotein Ibalpha (GP1BA) antagonist. Concentration-dependently inhibits botrocetin-, ristocetin- and low dose thrombin-induced platelet aggregation. Inhibits platelet adhesion only through inhibiting the vWF interaction with GP1BA, but has minimal effect on other platelet receptors, such as alpha-IIb/beta-3 (ITGA2B/ITGB3) or alpha-2/beta-1 (ITGA2/ITGB1). Causes an instant severe thrombocytopenia in rats and is not lethal to mice. The protein is Snaclec agkicetin-C subunit alpha of Deinagkistrodon acutus (Hundred-pace snake).